A 332-amino-acid polypeptide reads, in one-letter code: Apoptosis-enhancing nuclease (332 aa).

Residues 1 to 102 (MVPREVPESS…VPREAPSSGP (102 aa)) form a disordered region. Over residues 20–36 (ARRRHKRRSRQHQRFMA) the composition is skewed to basic residues. Positions 21-29 (RRRHKRRSR) match the Nucleolar localization signal motif. Residues 63–73 (QTPAGTEASGN) show a composition bias toward polar residues. Residues 105-261 (YVAIDCEMVG…EDAMTAMELY (157 aa)) form the Exonuclease domain. The Nuclear localization signal motif lies at 160–183 (RQHMHKAIPFQVAQKEILKLLKGK). A disordered region spans residues 272-332 (VASTAKAHPE…EGQGARSAPP (61 aa)). Basic and acidic residues predominate over residues 310–321 (GDTREAQDRQEG).

It is found in the nucleus. Its subcellular location is the nucleolus. In terms of biological role, exonuclease with activity against single- and double-stranded DNA and RNA. Mediates p53-induced apoptosis. When induced by p53 following DNA damage, digests double-stranded DNA to form single-stranded DNA and amplifies DNA damage signals, leading to enhancement of apoptosis. The chain is Apoptosis-enhancing nuclease from Rattus norvegicus (Rat).